The sequence spans 339 residues: Glycerol-3-phosphate dehydrogenase [NAD(P)+] (339 aa).

Positions 15, 16, 36, and 110 each coordinate NADPH. Residues Lys110, Gly139, and Thr141 each contribute to the sn-glycerol 3-phosphate site. Ala143 provides a ligand contact to NADPH. The sn-glycerol 3-phosphate site is built by Lys195, Asp248, Ser258, Arg259, and Asn260. Lys195 functions as the Proton acceptor in the catalytic mechanism. Residue Arg259 coordinates NADPH. Residues Val283 and Glu285 each contribute to the NADPH site.

This sequence belongs to the NAD-dependent glycerol-3-phosphate dehydrogenase family.

Its subcellular location is the cytoplasm. It carries out the reaction sn-glycerol 3-phosphate + NAD(+) = dihydroxyacetone phosphate + NADH + H(+). It catalyses the reaction sn-glycerol 3-phosphate + NADP(+) = dihydroxyacetone phosphate + NADPH + H(+). Its pathway is membrane lipid metabolism; glycerophospholipid metabolism. In terms of biological role, catalyzes the reduction of the glycolytic intermediate dihydroxyacetone phosphate (DHAP) to sn-glycerol 3-phosphate (G3P), the key precursor for phospholipid synthesis. The polypeptide is Glycerol-3-phosphate dehydrogenase [NAD(P)+] (Escherichia coli O17:K52:H18 (strain UMN026 / ExPEC)).